We begin with the raw amino-acid sequence, 474 residues long: tRNA-2-methylthio-N(6)-dimethylallyladenosine synthase (474 aa).

The region spanning 3-120 is the MTTase N-terminal domain; the sequence is QKLHIKTWGC…LPEMINQIRG (118 aa). 6 residues coordinate [4Fe-4S] cluster: Cys12, Cys49, Cys83, Cys157, Cys161, and Cys164. In terms of domain architecture, Radical SAM core spans 143–375; sequence RAEGPTAFVS…QQRINNQAAQ (233 aa). The TRAM domain occupies 378–441; it reads RAMLGTEQRV…TNSLRGEVVR (64 aa).

It belongs to the methylthiotransferase family. MiaB subfamily. As to quaternary structure, monomer. The cofactor is [4Fe-4S] cluster.

The protein localises to the cytoplasm. The enzyme catalyses N(6)-dimethylallyladenosine(37) in tRNA + (sulfur carrier)-SH + AH2 + 2 S-adenosyl-L-methionine = 2-methylsulfanyl-N(6)-dimethylallyladenosine(37) in tRNA + (sulfur carrier)-H + 5'-deoxyadenosine + L-methionine + A + S-adenosyl-L-homocysteine + 2 H(+). Catalyzes the methylthiolation of N6-(dimethylallyl)adenosine (i(6)A), leading to the formation of 2-methylthio-N6-(dimethylallyl)adenosine (ms(2)i(6)A) at position 37 in tRNAs that read codons beginning with uridine. This is tRNA-2-methylthio-N(6)-dimethylallyladenosine synthase from Pasteurella multocida (strain Pm70).